Reading from the N-terminus, the 501-residue chain is Glutathione gamma-glutamylcysteinyltransferase 1 (501 aa).

Residues 1-221 (MAMAGLYRRL…GFMLISRPHR (221 aa)) enclose the Peptidase C83 domain. Active-site residues include C56, H162, and D180.

The protein belongs to the phytochelatin synthase family. In terms of tissue distribution, expressed in roots, nodules and leaves.

The enzyme catalyses [Glu(-Cys)](n)-Gly + glutathione + H(+) = [Glu(-Cys)](n+1)-Gly + glycine. Its activity is regulated as follows. Requires cadmium for activity. Also activated in vitro by Zn(2+), Cu(2+), Fe(2+) or Fe(3+) ions, but not by Co(2+) or Ni(2+) ions. Functionally, involved in the synthesis of phytochelatins (PC) and homophytochelatins (hPC), the heavy-metal-binding peptides of plants. The sequence is that of Glutathione gamma-glutamylcysteinyltransferase 1 (PCS1) from Lotus japonicus (Lotus corniculatus var. japonicus).